Consider the following 110-residue polypeptide: ATP-dependent Clp protease adapter protein ClpS (110 aa).

The protein belongs to the ClpS family. Binds to the N-terminal domain of the chaperone ClpA.

In terms of biological role, involved in the modulation of the specificity of the ClpAP-mediated ATP-dependent protein degradation. This chain is ATP-dependent Clp protease adapter protein ClpS, found in Bartonella henselae (strain ATCC 49882 / DSM 28221 / CCUG 30454 / Houston 1) (Rochalimaea henselae).